The chain runs to 360 residues: WD repeat domain phosphoinositide-interacting protein 4 (360 aa).

WD repeat units lie at residues methionine 1–valine 34, lysine 40–aspartate 84, lysine 92–phenylalanine 128, arginine 133–leucine 174, serine 183–threonine 222, lysine 227–leucine 266, and glycine 284–aspartate 329. The L/FRRG motif motif lies at leucine 231–glycine 234.

This sequence belongs to the WD repeat PROPPIN family. Interacts with WIPI1. Interacts with WIPI2. Interacts with ATG2A and ATG2B. Interacts with ULK1. May interact with the PRKAA1, PRKAA2, PRKAB1 and PRKAG1 subunits of the AMPK kinase. May interact with NUDC. Ubiquitously expressed, with high expression in skeletal muscle and heart. Weakly expressed in liver and placenta. Expression is down-regulated in pancreatic and in kidney tumors.

It is found in the preautophagosomal structure. It localises to the cytoplasm. Activated upon amino-acid starvation. Its function is as follows. Component of the autophagy machinery that controls the major intracellular degradation process by which cytoplasmic materials are packaged into autophagosomes and delivered to lysosomes for degradation. Binds phosphatidylinositol 3-phosphate (PtdIns3P). Activated by the STK11/AMPK signaling pathway upon starvation, WDR45 is involved in autophagosome assembly downstream of WIPI2, regulating the size of forming autophagosomes. Together with WIPI1, promotes ATG2 (ATG2A or ATG2B)-mediated lipid transfer by enhancing ATG2-association with phosphatidylinositol 3-monophosphate (PI3P)-containing membranes. Probably recruited to membranes through its PtdIns3P activity. In Homo sapiens (Human), this protein is WD repeat domain phosphoinositide-interacting protein 4 (WDR45).